A 400-amino-acid chain; its full sequence is Acetate kinase (400 aa).

Position 10 (Asn10) interacts with Mg(2+). Residue Lys17 coordinates ATP. Arg91 serves as a coordination point for substrate. Asp150 functions as the Proton donor/acceptor in the catalytic mechanism. ATP-binding positions include 210 to 214 (HLGNG), 285 to 287 (DCR), and 333 to 337 (GIGEN). Glu387 is a Mg(2+) binding site.

This sequence belongs to the acetokinase family. In terms of assembly, homodimer. The cofactor is Mg(2+). Mn(2+) serves as cofactor.

The protein resides in the cytoplasm. It carries out the reaction acetate + ATP = acetyl phosphate + ADP. Its pathway is metabolic intermediate biosynthesis; acetyl-CoA biosynthesis; acetyl-CoA from acetate: step 1/2. In terms of biological role, catalyzes the formation of acetyl phosphate from acetate and ATP. Can also catalyze the reverse reaction. The sequence is that of Acetate kinase from Salmonella typhi.